Here is a 688-residue protein sequence, read N- to C-terminus: Potassium-transporting ATPase ATP-binding subunit (688 aa).

Helical transmembrane passes span 37–57 (FLVY…LVGI), 65–85 (ILGI…AEAI), 219–239 (IALQ…TVSL), and 262–282 (VALL…SIGI). Asp313 acts as the 4-aspartylphosphate intermediate in catalysis. ATP is bound by residues Asp350, Glu354, 383–390 (FTAKTRMS), and Lys401. Mg(2+)-binding residues include Asp524 and Asp528. Transmembrane regions (helical) follow at residues 594–614 (FAII…LNIM), 622–642 (AIFS…PLAL), and 668–688 (IIVP…IGIV).

This sequence belongs to the cation transport ATPase (P-type) (TC 3.A.3) family. Type IA subfamily. As to quaternary structure, the system is composed of three essential subunits: KdpA, KdpB and KdpC.

It is found in the cell membrane. The catalysed reaction is K(+)(out) + ATP + H2O = K(+)(in) + ADP + phosphate + H(+). In terms of biological role, part of the high-affinity ATP-driven potassium transport (or Kdp) system, which catalyzes the hydrolysis of ATP coupled with the electrogenic transport of potassium into the cytoplasm. This subunit is responsible for energy coupling to the transport system and for the release of the potassium ions to the cytoplasm. In Clostridium botulinum (strain Alaska E43 / Type E3), this protein is Potassium-transporting ATPase ATP-binding subunit.